Reading from the N-terminus, the 814-residue chain is Dimethyl sulfoxide reductase DmsA (814 aa).

Residues 1–45 (MKTKIPDAVLAAEVSRRGLVKTTAIGGLAMASSALTLPFSRIAHA) constitute a signal peptide (tat-type signal). Residues 56-118 (EKVIWSACTV…SMRRRVYNPD (63 aa)) form the 4Fe-4S Mo/W bis-MGD-type domain. [4Fe-4S] cluster contacts are provided by C63, C67, C71, and C104. Mo-bis(molybdopterin guanine dinucleotide) contacts are provided by residues 172-176 (LGGTM), S205, 244-245 (ET), 270-271 (ID), 291-293 (GTD), 386-387 (WG), R390, N488, 512-513 (ID), H701, 707-709 (HST), N788, and 804-805 (SH).

Belongs to the prokaryotic molybdopterin-containing oxidoreductase family. In terms of assembly, heterotrimeric enzyme composed of a catalytic heterodimer (DmsAB) and a membrane anchor protein (DmsC). Requires [4Fe-4S] cluster as cofactor. The cofactor is Mo-bis(molybdopterin guanine dinucleotide). In terms of processing, exported by the Tat system. The position of the signal peptide cleavage has been experimentally proven. Can also be exported by the Sec system.

It is found in the cell membrane. The enzyme catalyses dimethyl sulfide + a menaquinone + H2O = dimethyl sulfoxide + a menaquinol. With respect to regulation, inhibited by dithionite, sodium hydrogensulfite and tungstate. Functionally, catalyzes the reduction of dimethyl sulfoxide (DMSO) to dimethyl sulfide (DMS). DMSO reductase serves as the terminal reductase under anaerobic conditions, with DMSO being the terminal electron acceptor. Terminal reductase during anaerobic growth on various sulfoxides and N-oxide compounds. Allows E.coli to grow anaerobically on DMSO as respiratory oxidant. This is Dimethyl sulfoxide reductase DmsA (dmsA) from Escherichia coli (strain K12).